The primary structure comprises 419 residues: Gamma-glutamyl phosphate reductase (419 aa).

The protein belongs to the gamma-glutamyl phosphate reductase family.

Its subcellular location is the cytoplasm. It carries out the reaction L-glutamate 5-semialdehyde + phosphate + NADP(+) = L-glutamyl 5-phosphate + NADPH + H(+). It participates in amino-acid biosynthesis; L-proline biosynthesis; L-glutamate 5-semialdehyde from L-glutamate: step 2/2. Catalyzes the NADPH-dependent reduction of L-glutamate 5-phosphate into L-glutamate 5-semialdehyde and phosphate. The product spontaneously undergoes cyclization to form 1-pyrroline-5-carboxylate. The polypeptide is Gamma-glutamyl phosphate reductase (Solidesulfovibrio magneticus (strain ATCC 700980 / DSM 13731 / RS-1) (Desulfovibrio magneticus)).